Reading from the N-terminus, the 476-residue chain is NADH-quinone oxidoreductase subunit N (476 aa).

Transmembrane regions (helical) follow at residues 4–24 (LLALSPLILVCATAIVVMLTI), 32–52 (LTATLTVVGLNLALAAQVVAW), 67–87 (GLAVFGGVLILIATLACATLG), 100–117 (EYYLLLLCAAAGGLALVS), 121–141 (LAALFFGLELLSMPLYGMLAY), 155–175 (YMVLSAAASAFLLFGMALLYS), 198–218 (LMAGMGMMLIGLGFKLSIVPF), 230–250 (PAPAATFLASASKVAVLLVLL), 263–283 (LHSLLAVLAFVTMLVGNLLAL), 291–311 (LLGYSSIAHFGYLLVALVVND), 319–339 (ALYLVTYVLTTLGAFGVVTLL), 366–386 (AVLTVMMLSLAGIPFTAGFIG), 406–426 (VVAGSAIGLYYYLRVMVTLFL), and 447–467 (VVVLGLAALVVVLGVYPAPMI).

It belongs to the complex I subunit 2 family. NDH-1 is composed of 14 different subunits. Subunits NuoA, H, J, K, L, M, N constitute the membrane sector of the complex.

It is found in the cell inner membrane. It carries out the reaction a quinone + NADH + 5 H(+)(in) = a quinol + NAD(+) + 4 H(+)(out). In terms of biological role, NDH-1 shuttles electrons from NADH, via FMN and iron-sulfur (Fe-S) centers, to quinones in the respiratory chain. The immediate electron acceptor for the enzyme in this species is believed to be ubiquinone. Couples the redox reaction to proton translocation (for every two electrons transferred, four hydrogen ions are translocated across the cytoplasmic membrane), and thus conserves the redox energy in a proton gradient. This chain is NADH-quinone oxidoreductase subunit N, found in Chromohalobacter salexigens (strain ATCC BAA-138 / DSM 3043 / CIP 106854 / NCIMB 13768 / 1H11).